The primary structure comprises 291 residues: ATP synthase gamma chain (291 aa).

The protein belongs to the ATPase gamma chain family. F-type ATPases have 2 components, CF(1) - the catalytic core - and CF(0) - the membrane proton channel. CF(1) has five subunits: alpha(3), beta(3), gamma(1), delta(1), epsilon(1). CF(0) has three main subunits: a, b and c.

Its subcellular location is the cell inner membrane. Produces ATP from ADP in the presence of a proton gradient across the membrane. The gamma chain is believed to be important in regulating ATPase activity and the flow of protons through the CF(0) complex. The protein is ATP synthase gamma chain of Nitratidesulfovibrio vulgaris (strain ATCC 29579 / DSM 644 / CCUG 34227 / NCIMB 8303 / VKM B-1760 / Hildenborough) (Desulfovibrio vulgaris).